The primary structure comprises 163 residues: Protein-export protein SecB (163 aa).

Belongs to the SecB family. Homotetramer, a dimer of dimers. One homotetramer interacts with 1 SecA dimer.

It is found in the cytoplasm. In terms of biological role, one of the proteins required for the normal export of preproteins out of the cell cytoplasm. It is a molecular chaperone that binds to a subset of precursor proteins, maintaining them in a translocation-competent state. It also specifically binds to its receptor SecA. This is Protein-export protein SecB from Brucella abortus (strain S19).